We begin with the raw amino-acid sequence, 508 residues long: Protein FAM217A (508 aa).

This sequence belongs to the FAM217 family.

This is Protein FAM217A (FAM217A) from Homo sapiens (Human).